We begin with the raw amino-acid sequence, 166 residues long: MAAAVLRAALQDWRSCLGRSYGRRKLSQTQGPPDNPGFVESVDEYQFVERLLPPTKIPEPPKHKHYPTPSGWQPPRDPLPSLPYFVRRSRMHNIPVYKEITHGNRQMTLIRKVEGDIWALQKDVEEFLSPLLGKTPITQVNEVTGTLRIKGYFDEQLKAWLLEKGF.

The tract at residues 54 to 77 (PTKIPEPPKHKHYPTPSGWQPPRD) is disordered.

The protein belongs to the mitochondrion-specific ribosomal protein mL49 family. As to quaternary structure, component of the mitochondrial ribosome large subunit (39S) which comprises a 16S rRNA and about 50 distinct proteins. Interacts with OXA1L.

Its subcellular location is the mitochondrion. This Mus musculus (Mouse) protein is Large ribosomal subunit protein mL49 (Mrpl49).